The following is a 456-amino-acid chain: Bifunctional protein GlmU (456 aa).

The interval 1-229 (MLNNAMSVVI…LSEVEGVNNR (229 aa)) is pyrophosphorylase. UDP-N-acetyl-alpha-D-glucosamine contacts are provided by residues 11 to 14 (LAAG), K25, Q76, 81 to 82 (GT), 103 to 105 (YGD), G140, E154, N169, and N227. D105 is a Mg(2+) binding site. Mg(2+) is bound at residue N227. A linker region spans residues 230–250 (LQLSRLERVYQSEQAEKLLLA). The N-acetyltransferase stretch occupies residues 251 to 456 (GVMLRDPARF…EGWRRPVKKK (206 aa)). Positions 333 and 351 each coordinate UDP-N-acetyl-alpha-D-glucosamine. H363 (proton acceptor) is an active-site residue. Residues Y366 and N377 each contribute to the UDP-N-acetyl-alpha-D-glucosamine site. Acetyl-CoA-binding positions include A380, 386 to 387 (NY), S405, A423, and R440.

It in the N-terminal section; belongs to the N-acetylglucosamine-1-phosphate uridyltransferase family. In the C-terminal section; belongs to the transferase hexapeptide repeat family. As to quaternary structure, homotrimer. Mg(2+) is required as a cofactor.

It localises to the cytoplasm. It carries out the reaction alpha-D-glucosamine 1-phosphate + acetyl-CoA = N-acetyl-alpha-D-glucosamine 1-phosphate + CoA + H(+). The enzyme catalyses N-acetyl-alpha-D-glucosamine 1-phosphate + UTP + H(+) = UDP-N-acetyl-alpha-D-glucosamine + diphosphate. It functions in the pathway nucleotide-sugar biosynthesis; UDP-N-acetyl-alpha-D-glucosamine biosynthesis; N-acetyl-alpha-D-glucosamine 1-phosphate from alpha-D-glucosamine 6-phosphate (route II): step 2/2. It participates in nucleotide-sugar biosynthesis; UDP-N-acetyl-alpha-D-glucosamine biosynthesis; UDP-N-acetyl-alpha-D-glucosamine from N-acetyl-alpha-D-glucosamine 1-phosphate: step 1/1. The protein operates within bacterial outer membrane biogenesis; LPS lipid A biosynthesis. Its function is as follows. Catalyzes the last two sequential reactions in the de novo biosynthetic pathway for UDP-N-acetylglucosamine (UDP-GlcNAc). The C-terminal domain catalyzes the transfer of acetyl group from acetyl coenzyme A to glucosamine-1-phosphate (GlcN-1-P) to produce N-acetylglucosamine-1-phosphate (GlcNAc-1-P), which is converted into UDP-GlcNAc by the transfer of uridine 5-monophosphate (from uridine 5-triphosphate), a reaction catalyzed by the N-terminal domain. This chain is Bifunctional protein GlmU, found in Escherichia coli O139:H28 (strain E24377A / ETEC).